The primary structure comprises 96 residues: Keratin-associated protein 12-1 (96 aa).

14 tandem repeats follow at residues 10–14 (CQPAC), 15–19 (CAPSP), 24–28 (CYIPV), 30–34 (CQSSV), 35–39 (CVPVS), 45–49 (CVPVR), 50–54 (CQSSV), 55–59 (CVPVS), 60–64 (CRPVV), 70–74 (CQSSG), 75–79 (CCQPS), 80–84 (CTSVL), 85–89 (CRPIS), and 90–94 (CSTPS). A 14 X 5 AA approximate repeats region spans residues 10–94 (CQPACCAPSP…CRPISCSTPS (85 aa)).

Belongs to the KRTAP type 12 family. In terms of assembly, interacts with hair keratins. Restricted to a narrow region of the hair fiber cuticle, lying approximately 20 cell layers above the apex of the dermal papilla of the hair root; not detected in any other tissues.

In the hair cortex, hair keratin intermediate filaments are embedded in an interfilamentous matrix, consisting of hair keratin-associated proteins (KRTAP), which are essential for the formation of a rigid and resistant hair shaft through their extensive disulfide bond cross-linking with abundant cysteine residues of hair keratins. The matrix proteins include the high-sulfur and high-glycine-tyrosine keratins. The sequence is that of Keratin-associated protein 12-1 (KRTAP12-1) from Homo sapiens (Human).